The sequence spans 554 residues: (+)-delta-cadinene synthase isozyme XC14 (554 aa).

The span at 1–16 shows a compositional bias: low complexity; sequence MASQVSQMPSSSPLSS. A disordered region spans residues 1-23; the sequence is MASQVSQMPSSSPLSSNKDEMRP. The Mg(2+) site is built by D307, D311, and D451. The DDXXD motif signature appears at 307 to 311; it reads DDTYD.

This sequence belongs to the terpene synthase family. Mg(2+) is required as a cofactor.

It catalyses the reaction (2E,6E)-farnesyl diphosphate = (1S,8aR)-delta-cadinene + diphosphate. Its pathway is secondary metabolite biosynthesis; terpenoid biosynthesis. Functionally, responsible for the cyclization of trans,trans-farnesyl diphosphate (FPP) to (+)-delta cadinene. This chain is (+)-delta-cadinene synthase isozyme XC14, found in Gossypium arboreum (Tree cotton).